We begin with the raw amino-acid sequence, 137 residues long: Large-conductance mechanosensitive channel (137 aa).

2 helical membrane passes run 9–29 (AFAVKGNVVDMAVGIIIGAAF) and 79–99 (IQTILDFVIVAFAIFMGVKAI).

The protein belongs to the MscL family. In terms of assembly, homopentamer.

It localises to the cell inner membrane. In terms of biological role, channel that opens in response to stretch forces in the membrane lipid bilayer. May participate in the regulation of osmotic pressure changes within the cell. The protein is Large-conductance mechanosensitive channel of Pseudomonas aeruginosa (strain UCBPP-PA14).